The sequence spans 511 residues: Gap junction alpha-3 protein (511 aa).

The stretch at 2-15 is an intramembrane region; it reads GDWSFLGRLLENAQ. Residues 16-19 are Cytoplasmic-facing; the sequence is EHST. Residues 20–40 form a helical membrane-spanning segment; the sequence is VIGKVWLTVLFIFRILVLGAA. Residues 41 to 71 lie on the Extracellular side of the membrane; that stretch reads AEEVWGDEQSDFTCNTQQPGCENVCYDKAFP. 3 cysteine pairs are disulfide-bonded: cysteine 54–cysteine 214, cysteine 61–cysteine 208, and cysteine 65–cysteine 203. Residues 72 to 92 traverse the membrane as a helical segment; that stretch reads ISHIRFWVLQIIFVSTPTLIY. The Cytoplasmic portion of the chain corresponds to 93–174; sequence LGHVLHIVRM…GALLRTYIFN (82 aa). Basic and acidic residues predominate over residues 110–119; sequence EEELKKRGSV. The interval 110–143 is disordered; the sequence is EEELKKRGSVKDNNYPGAATSGGGSGGGNNFKDP. Positions 129-138 are enriched in gly residues; that stretch reads TSGGGSGGGN. Residues 175–195 traverse the membrane as a helical segment; sequence IIFKTLFEVGFIVGQYFLYGF. Residues 196–223 are Extracellular-facing; the sequence is ELKPVYQCSRPPCPHTVDCFISRPTEKT. A helical membrane pass occupies residues 224–244; the sequence is IFIIFMLVVASVSLLLNMLEI. Residues 245–511 are Cytoplasmic-facing; sequence YHLGWKKLKQ…SRARSDDLAV (267 aa). The segment at 397–511 is disordered; sequence AEQQGKAPSS…SRARSDDLAV (115 aa). Low complexity-rich tracts occupy residues 403 to 415 and 440 to 456; these read APSSSAGSSTPSS and TTTNSGSSTSLSGASGS.

Belongs to the connexin family. As to quaternary structure, a hemichannel or connexon is composed of a hexamer of connexins. A functional gap junction is formed by the apposition of two hemichannels. During early stages of lens development, interacts with the C-terminus of MIP. Detected in eye lens.

Its subcellular location is the cell membrane. It localises to the cell junction. The protein localises to the gap junction. Structural component of lens fiber gap junctions. Gap junctions are dodecameric channels that connect the cytoplasm of adjoining cells. They are formed by the docking of two hexameric hemichannels, one from each cell membrane. Small molecules and ions diffuse from one cell to a neighboring cell via the central pore. In Gallus gallus (Chicken), this protein is Gap junction alpha-3 protein (GJA3).